The following is a 298-amino-acid chain: Elongation factor Ts (298 aa).

Residues 80 to 83 (TDFV) are involved in Mg(2+) ion dislocation from EF-Tu.

It belongs to the EF-Ts family.

It localises to the cytoplasm. Functionally, associates with the EF-Tu.GDP complex and induces the exchange of GDP to GTP. It remains bound to the aminoacyl-tRNA.EF-Tu.GTP complex up to the GTP hydrolysis stage on the ribosome. The protein is Elongation factor Ts of Acidovorax sp. (strain JS42).